The following is a 494-amino-acid chain: METTTIDIQALKKELVLDLIQIGALKFGRFTLKSGIVSPFYVDLRIIGPKMLRQFSVLLYHVMTVKGLTNMEKRVICGVPYSALTFSSCMSMTYDLPMVICRKERKQYGTGNMVEGIYTKNETNCILIEDVITSGASIVETAEKLENEGLLVTDALVFLTREQLPLTNGMHILKKGEKVYNVHPCLTMTEVTQVLLDEGKMSQEQREDILQFIGTNTFSETKTTAVPQKKKELTFTERAELTNNEFSKKLFKLMEEKQTNLCVAADITSKDDLLKLADETGPEICMLKTHIDTLDDQPDEQFTQQLKELAKKHNFLIFEDRKLADIGQVVKQQYARGPFKIAQWSDLCNSHLVSGGSATVKALKESLKEENITEPRGLLLIAQMSTEGATTGESTKQEALKVALENPDFVSGFICQSKLRDDLDQFLYCTPGVRLDVKGDSLGQQYNSPEYVVCEKKCDVIIVGRGIYHDKERQNAAKLYRKLGWEAYQKRIQQ.

UMP contacts are provided by residues aspartate 266 and lysine 288 to histidine 290. Residues lysine 288, lysine 322, aspartate 325, serine 385, glutamine 444–tyrosine 446, and glycine 464–arginine 465 contribute to the orotidine 5'-phosphate site. Lysine 322 is an active-site residue. Residues aspartate 325, serine 385, glutamine 444–tyrosine 446, and glycine 464–arginine 465 each bind UMP.

The protein in the N-terminal section; belongs to the purine/pyrimidine phosphoribosyltransferase family. It in the C-terminal section; belongs to the OMP decarboxylase family.

The enzyme catalyses orotidine 5'-phosphate + diphosphate = orotate + 5-phospho-alpha-D-ribose 1-diphosphate. It catalyses the reaction orotidine 5'-phosphate + H(+) = UMP + CO2. It functions in the pathway pyrimidine metabolism; UMP biosynthesis via de novo pathway; UMP from orotate: step 1/2. It participates in pyrimidine metabolism; UMP biosynthesis via de novo pathway; UMP from orotate: step 2/2. In terms of biological role, bifunctional enzyme catalyzing the last two steps of de novo pyrimidine biosynthesis, orotate phosphoribosyltransferase (OPRT), which converts orotate to orotidine-5'-monophosphate (OMP), and orotidine-5'-monophosphate decarboxylase (ODC), the terminal enzymatic reaction that decarboxylates OMP to uridine monophosphate (UMP). The polypeptide is Uridine 5'-monophosphate synthase (UMP) (Naegleria gruberi (Amoeba)).